Here is a 492-residue protein sequence, read N- to C-terminus: N-succinylglutamate 5-semialdehyde dehydrogenase (492 aa).

220–225 (GSANTG) serves as a coordination point for NAD(+). Active-site residues include Glu-243 and Cys-277.

The protein belongs to the aldehyde dehydrogenase family. AstD subfamily.

The catalysed reaction is N-succinyl-L-glutamate 5-semialdehyde + NAD(+) + H2O = N-succinyl-L-glutamate + NADH + 2 H(+). The protein operates within amino-acid degradation; L-arginine degradation via AST pathway; L-glutamate and succinate from L-arginine: step 4/5. Functionally, catalyzes the NAD-dependent reduction of succinylglutamate semialdehyde into succinylglutamate. The chain is N-succinylglutamate 5-semialdehyde dehydrogenase from Escherichia fergusonii (strain ATCC 35469 / DSM 13698 / CCUG 18766 / IAM 14443 / JCM 21226 / LMG 7866 / NBRC 102419 / NCTC 12128 / CDC 0568-73).